The sequence spans 357 residues: Poly(3-hydroxyalkanoate) polymerase subunit PhaE (357 aa).

The tract at residues 320–357 is disordered; sequence AALAGEEPATKPATALRSPAPAAKAPARRRTTKTNPAD. Over residues 331–344 the composition is skewed to low complexity; it reads PATALRSPAPAAKA.

The protein belongs to the PHA/PHB synthase family. Type III PhaE subfamily. In terms of assembly, a large complex of PhaC and PhaE; the ratio of the subunits has been estimated to be from 1:1 to 4:1, with more PhaE than PhaC.

It localises to the cytoplasm. It functions in the pathway biopolymer metabolism; poly-(R)-3-hydroxybutanoate biosynthesis. Its function is as follows. Polymerizes D(-)-3-hydroxybutyryl-CoA to create polyhydroxybutyrate (PHB) which consists of thousands of hydroxybutyrate molecules linked end to end. This subunit has no catalytic activity but enhances the activity of PhaC, the catalytic subunit, 100-fold. This is Poly(3-hydroxyalkanoate) polymerase subunit PhaE from Allochromatium vinosum (strain ATCC 17899 / DSM 180 / NBRC 103801 / NCIMB 10441 / D) (Chromatium vinosum).